Reading from the N-terminus, the 173-residue chain is Sialic acid TRAP transporter small permease protein SiaQ (173 aa).

4 helical membrane passes run 13–33 (IEEI…TWQI), 46–66 (SEEL…AIAI), 87–107 (LSLV…IIVL), and 123–143 (LGIS…FMVF).

This sequence belongs to the TRAP transporter small permease family. In terms of assembly, the complex comprises the extracytoplasmic solute receptor protein SiaP, and the two transmembrane proteins SiaQ and SiaM. SiaQ and SiaM form a tight 1:1 complex.

It is found in the cell inner membrane. Part of the tripartite ATP-independent periplasmic (TRAP) transport system SiaPQM that catalyzes unidirectional Na(+)-dependent sialic acid uptake. The protein is Sialic acid TRAP transporter small permease protein SiaQ of Vibrio cholerae serotype O1 (strain ATCC 39315 / El Tor Inaba N16961).